Consider the following 327-residue polypeptide: MDKVFDYEDIQLIPAKCIVDSRSECDPTVELGGFTFRLPVVPANMQTIIDEKVALMLAKNGYFYIMHRFNPETRLAFIQDMHERGLYASISVGVKDEEYGFIEVLKSTGHTPEFITIDIAHGHSNAVIRMIQHIKHHLPGSFVIAGNVGTPEAVRELEHAGADATKVGIGPGKVCITKIKTGFGTGGWQLAALRWCAKAATKPIIADGGIRTHGDIAKSIRFGASMVMIGSLFAGHDESPGETFEQDGKQLKEYFGSASEFQKGERKNVEGKKMFVEHKGALQDTLTEMEQDLQSAISYAGGDSLEALRTVDYVMVKNSIFNGDKVY.

Residue Cys-175 is the Thioimidate intermediate of the active site. NADP(+) is bound at residue 204–227; that stretch reads IIADGGIRTHGDIAKSIRFGASMV.

Belongs to the IMPDH/GMPR family. GuaC type 2 subfamily.

The enzyme catalyses IMP + NH4(+) + NADP(+) = GMP + NADPH + 2 H(+). In terms of biological role, catalyzes the irreversible NADPH-dependent deamination of GMP to IMP. It functions in the conversion of nucleobase, nucleoside and nucleotide derivatives of G to A nucleotides, and in maintaining the intracellular balance of A and G nucleotides. This Exiguobacterium sp. (strain ATCC BAA-1283 / AT1b) protein is GMP reductase.